A 375-amino-acid polypeptide reads, in one-letter code: uncharacterized protein (375 aa).

Belongs to the IMPDH/GMPR family.

This is an uncharacterized protein from Mycobacterium tuberculosis (strain CDC 1551 / Oshkosh).